Reading from the N-terminus, the 119-residue chain is MVKLAFPRELRLLTPTHFTFVFQQPQRAGTPQITILGRLNALGHPRIGLTVAKKHVKRAHERNRIKRLTRESFRLRQHELPAMDFVIVAKKGIGELDNHALTEALEKLWRRHCRLARGS.

This sequence belongs to the RnpA family. Consists of a catalytic RNA component (M1 or rnpB) and a protein subunit.

The catalysed reaction is Endonucleolytic cleavage of RNA, removing 5'-extranucleotides from tRNA precursor.. RNaseP catalyzes the removal of the 5'-leader sequence from pre-tRNA to produce the mature 5'-terminus. It can also cleave other RNA substrates such as 4.5S RNA. The protein component plays an auxiliary but essential role in vivo by binding to the 5'-leader sequence and broadening the substrate specificity of the ribozyme. This is Ribonuclease P protein component from Erwinia tasmaniensis (strain DSM 17950 / CFBP 7177 / CIP 109463 / NCPPB 4357 / Et1/99).